The chain runs to 327 residues: UPF0065 protein in gbd 5'region (327 aa).

A signal peptide (tat-type signal) is located at residues 1–30; the sequence is MQRRHFIARAGIAAATAALGLAAMPAQAQA.

The protein belongs to the UPF0065 (bug) family. Post-translationally, predicted to be exported by the Tat system. The position of the signal peptide cleavage has not been experimentally proven.

The protein localises to the periplasm. The sequence is that of UPF0065 protein in gbd 5'region from Cupriavidus necator (Alcaligenes eutrophus).